We begin with the raw amino-acid sequence, 89 residues long: UPF0237 protein LMOf2365_0562 (89 aa).

The ACT domain maps to 4 to 78; sequence VLTVIGKDNV…EDLQVKIHIQ (75 aa).

The protein belongs to the UPF0237 family.

This chain is UPF0237 protein LMOf2365_0562, found in Listeria monocytogenes serotype 4b (strain F2365).